Here is a 1846-residue protein sequence, read N- to C-terminus: Unconventional myosin-Vb (1846 aa).

Residues 8–60 form the Myosin N-terminal SH3-like domain; it reads SRYTRVWIPDPDEVWRSAELTKDYKDGDESLQLRLEDDTILDYPIDVQNNQVP. The requires for interaction with LIMA1 stretch occupies residues 21 to 40; sequence VWRSAELTKDYKDGDESLQL. Positions 69 to 763 constitute a Myosin motor domain; that stretch reads VGENDLTALS…QVAYLEKLRA (695 aa). Residue 163-170 coordinates ATP; sequence GESGAGKT. Residues 599–629 form a disordered region; it reads VPATNTAKSRSSSKINVRSSRPLMKAPNKEH. Residues 607–619 show a composition bias toward low complexity; sequence SRSSSKINVRSSR. An actin-binding region spans residues 641 to 663; sequence LNLLMETLNATTPHYVRCIKPND. IQ domains lie at 767–788, 789–813, 814–837, 838–861, 862–884, and 885–914; these read REAT…KYRR, LRAA…EHLR, RTRA…YCRV, RRAA…PPVL, TEHK…HFQR, and QRDA…EARS. Coiled coils occupy residues 915 to 1272 and 1334 to 1450; these read AEHL…ADQR and LKQV…RHHE. The tract at residues 1088 to 1122 is disordered; the sequence is RDEQQTPGHRKNPSNQSSLESDSNYPSISTSEIGD. Over residues 1100–1120 the composition is skewed to polar residues; it reads PSNQSSLESDSNYPSISTSEI. The residue at position 1444 (Ser-1444) is a Phosphoserine. One can recognise a Dilute domain in the interval 1524–1801; the sequence is SSTINGIKKV…IRTIQAQLQE (278 aa).

This sequence belongs to the TRAFAC class myosin-kinesin ATPase superfamily. Myosin family. In terms of assembly, component of the CART complex, at least composed of ACTN4, HGS/HRS, MYO5B and TRIM3. Interacts with RAB11FIP2. Interacts with RAB11A and RAB8A. Found in a complex with CFTR and RAB11A. Interacts with NPC1L1. Interacts with LIMA1.

It is found in the cytoplasm. In terms of biological role, may be involved in vesicular trafficking via its association with the CART complex. The CART complex is necessary for efficient transferrin receptor recycling but not for EGFR degradation. Required in a complex with RAB11A and RAB11FIP2 for the transport of NPC1L1 to the plasma membrane. Together with RAB11A participates in CFTR trafficking to the plasma membrane and TF (transferrin) recycling in nonpolarized cells. Together with RAB11A and RAB8A participates in epithelial cell polarization. Together with RAB25 regulates transcytosis. Required for proper localization of bile salt export pump ABCB11 at the apical/canalicular plasma membrane of hepatocytes. The protein is Unconventional myosin-Vb (Myo5b) of Rattus norvegicus (Rat).